A 105-amino-acid polypeptide reads, in one-letter code: Protein yippee-like At4g27740 (105 aa).

The 98-residue stretch at 8–105 (PTYFCRNCEN…IEKLKLTKRY (98 aa)) folds into the Yippee domain. Cys12, Cys15, Cys68, and Cys71 together coordinate Zn(2+).

Belongs to the yippee family.

The sequence is that of Protein yippee-like At4g27740 from Arabidopsis thaliana (Mouse-ear cress).